The primary structure comprises 217 residues: Small ribosomal subunit protein uS3c (217 aa).

One can recognise a KH type-2 domain in the interval 47–119 (VRTHIKSSSN…KLHIAIEKVA (73 aa)).

This sequence belongs to the universal ribosomal protein uS3 family. In terms of assembly, part of the 30S ribosomal subunit.

Its subcellular location is the plastid. It localises to the chloroplast. The polypeptide is Small ribosomal subunit protein uS3c (rps3) (Pinus thunbergii (Japanese black pine)).